The sequence spans 90 residues: Heat shock protein beta-7 (90 aa).

In terms of domain architecture, sHSP spans 39–90 (PLTFPARPGGQGNIKTLGDAYEFTVDMRDFSPEDIIVTTSNNHIEVRAEKKP).

This sequence belongs to the small heat shock protein (HSP20) family. As to quaternary structure, interacts with C-terminal domain of actin-binding protein 280. As to expression, found in both cardiac and skeletal muscle.

The protein resides in the cytoplasm. The protein localises to the nucleus. Its subcellular location is the cajal body. This Rattus norvegicus (Rat) protein is Heat shock protein beta-7 (Hspb7).